Reading from the N-terminus, the 530-residue chain is NAD(+) kinase (530 aa).

Disordered stretches follow at residues 1–27 (MKEN…HNNN), 57–99 (ISSE…KSSN), and 486–530 (SLEA…RFSV). Residues 13–25 (WVNEEDGRNDHHN) show a composition bias toward basic and acidic residues. Positions 59 to 75 (SESSSRRSSLLNKDSSL) are enriched in low complexity. Over residues 88–99 (INGTRGSSKSSN) the composition is skewed to polar residues. A phosphoserine mark is found at Ser-499 and Ser-503. The span at 499–508 (SDDESDDESV) shows a compositional bias: acidic residues.

Belongs to the NAD kinase family. As to quaternary structure, homohexamer.

The catalysed reaction is NAD(+) + ATP = ADP + NADP(+) + H(+). In terms of biological role, specifically phosphorylates NAD in the presence of ATP, dATP, or CTP as phosphoryl donors. In Saccharomyces cerevisiae (strain ATCC 204508 / S288c) (Baker's yeast), this protein is NAD(+) kinase (UTR1).